The following is a 105-amino-acid chain: MRKTKRRPVSVGEMLKVEFLEPMGITSKALAEAMGVHRNTVSNLINGGVLTAPVAIKLAAALGNTPEFWLNIQHAVDLWDTRNRYQEEAKFVKPLFVSLEQSART.

The 55-residue stretch at 15–69 folds into the HTH cro/C1-type domain; the sequence is LKVEFLEPMGITSKALAEAMGVHRNTVSNLINGGVLTAPVAIKLAAALGNTPEFW. The H-T-H motif DNA-binding region spans 27-46; it reads SKALAEAMGVHRNTVSNLIN.

Functionally, antitoxin component of a type II toxin-antitoxin (TA) system that counteracts the effect of the HigB-1 toxin. Binds to its own promoter and regulates transcription of the higB-1/higA-1 operon. The sequence is that of Antitoxin HigA-1 (higA-1) from Vibrio cholerae serotype O1 (strain ATCC 39315 / El Tor Inaba N16961).